A 214-amino-acid chain; its full sequence is Phosphoenolpyruvate guanylyltransferase (214 aa).

Phosphoenolpyruvate is bound by residues Thr-139, Gly-155, and Ser-158.

This sequence belongs to the CofC family.

The enzyme catalyses phosphoenolpyruvate + GTP + H(+) = enolpyruvoyl-2-diphospho-5'-guanosine + diphosphate. It functions in the pathway cofactor biosynthesis; coenzyme F420 biosynthesis. Guanylyltransferase that catalyzes the activation of phosphoenolpyruvate (PEP) as enolpyruvoyl-2-diphospho-5'-guanosine, via the condensation of PEP with GTP. It is involved in the biosynthesis of coenzyme F420, a hydride carrier cofactor. The chain is Phosphoenolpyruvate guanylyltransferase from Salinispora arenicola (strain CNS-205).